Reading from the N-terminus, the 539-residue chain is GMP synthase [glutamine-hydrolyzing] (539 aa).

A Glutamine amidotransferase type-1 domain is found at 4–202; the sequence is KILILDFGSQ…VLQIAGAKPD (199 aa). The active-site Nucleophile is the Cys81. Residues His176 and Glu178 contribute to the active site. A GMPS ATP-PPase domain is found at 203–395; sequence WIMKNHIEEA…LGLPPEMVYR (193 aa). Residue 230 to 236 coordinates ATP; sequence SGGVDSS.

Homodimer.

The catalysed reaction is XMP + L-glutamine + ATP + H2O = GMP + L-glutamate + AMP + diphosphate + 2 H(+). It functions in the pathway purine metabolism; GMP biosynthesis; GMP from XMP (L-Gln route): step 1/1. Catalyzes the synthesis of GMP from XMP. The protein is GMP synthase [glutamine-hydrolyzing] of Burkholderia orbicola (strain AU 1054).